The sequence spans 354 residues: UDP-N-acetylglucosamine--N-acetylmuramyl-(pentapeptide) pyrophosphoryl-undecaprenol N-acetylglucosamine transferase (354 aa).

UDP-N-acetyl-alpha-D-glucosamine contacts are provided by residues 13-15 (SGG), Asn125, Arg161, Ser189, Ile242, 261-266 (ALTVSE), and Gln286.

The protein belongs to the glycosyltransferase 28 family. MurG subfamily.

The protein localises to the cell inner membrane. It carries out the reaction di-trans,octa-cis-undecaprenyl diphospho-N-acetyl-alpha-D-muramoyl-L-alanyl-D-glutamyl-meso-2,6-diaminopimeloyl-D-alanyl-D-alanine + UDP-N-acetyl-alpha-D-glucosamine = di-trans,octa-cis-undecaprenyl diphospho-[N-acetyl-alpha-D-glucosaminyl-(1-&gt;4)]-N-acetyl-alpha-D-muramoyl-L-alanyl-D-glutamyl-meso-2,6-diaminopimeloyl-D-alanyl-D-alanine + UDP + H(+). It participates in cell wall biogenesis; peptidoglycan biosynthesis. Cell wall formation. Catalyzes the transfer of a GlcNAc subunit on undecaprenyl-pyrophosphoryl-MurNAc-pentapeptide (lipid intermediate I) to form undecaprenyl-pyrophosphoryl-MurNAc-(pentapeptide)GlcNAc (lipid intermediate II). The chain is UDP-N-acetylglucosamine--N-acetylmuramyl-(pentapeptide) pyrophosphoryl-undecaprenol N-acetylglucosamine transferase from Buchnera aphidicola subsp. Schizaphis graminum (strain Sg).